The sequence spans 548 residues: MKKVTAMLFSMAVGLNAVSMAAKAKASEEQETDVLLIGGGIMSATLGTYLRELEPEWSMTMVERLEGVAQESSNGWNNAGTGHSALMELNYTPQNADGSISIEKAVAINEAFQISRQFWAHQVERGVLRTPRSFINTVPHMSFVWGEDNVNFLRARYAALQQSSLFRGMRYSEDHAQIKEWAPLVMEGRDPQQKVAATRTEIGTDVNYGEITRQLIASLQKKSNFSLQLSSEVRALKRNDDNSWTVTVADLKNGTAQNIRAKFVFIGAGGAALKLLQESGIPEAKDYAGFPVGGQFLVSENPDVVNHHLAKVYGKASVGAPPMSVPHIDTRVLDGKRVVLFGPFATFSTKFLKNGSLWDLMSSTTTSNVMPMMHVGLDNFDLVKYLVSQVMLSEEDRFEALKEYYPQAKKEDWRLWQAGQRVQIIKRDADKGGVLRLGTEVVSDQQGTIAALLGASPGASTAAPIMLNLLEKVFGDRVSSPQWQATLKAIVPSYGRKLNGDVAATERELQYTSEVLGLKYDKPQAADSTPKPQLKPQLVQKEVADIAL.

The protein belongs to the MQO family. Requires FAD as cofactor.

It catalyses the reaction (S)-malate + a quinone = a quinol + oxaloacetate. The protein operates within carbohydrate metabolism; tricarboxylic acid cycle; oxaloacetate from (S)-malate (quinone route): step 1/1. This Escherichia coli O6:K15:H31 (strain 536 / UPEC) protein is Probable malate:quinone oxidoreductase.